The chain runs to 465 residues: A-type ATP synthase subunit B (465 aa).

It belongs to the ATPase alpha/beta chains family. In terms of assembly, has multiple subunits with at least A(3), B(3), C, D, E, F, H, I and proteolipid K(x).

It is found in the cell membrane. Functionally, component of the A-type ATP synthase that produces ATP from ADP in the presence of a proton gradient across the membrane. The B chain is a regulatory subunit. The chain is A-type ATP synthase subunit B from Pyrococcus horikoshii (strain ATCC 700860 / DSM 12428 / JCM 9974 / NBRC 100139 / OT-3).